A 164-amino-acid chain; its full sequence is 4-hydroxy-4-methyl-2-oxoglutarate aldolase (164 aa).

Residues 74 to 77 and R96 each bind substrate; that span reads GGNL. A divalent metal cation is bound at residue D97.

Belongs to the class II aldolase/RraA-like family. In terms of assembly, homotrimer. It depends on Ni(2+) as a cofactor. Co(2+) serves as cofactor. The cofactor is Zn(2+).

It carries out the reaction 4-hydroxy-4-methyl-2-oxoglutarate = 2 pyruvate. The enzyme catalyses oxaloacetate + H(+) = pyruvate + CO2. With respect to regulation, competitively inhibited by oxalate, a pyruvate enolate analog. Functionally, catalyzes the aldol cleavage of 4-hydroxy-4-methyl-2-oxoglutarate (HMG) into 2 molecules of pyruvate. Also contains a secondary oxaloacetate (OAA) decarboxylase activity due to the common pyruvate enolate transition state formed following C-C bond cleavage in the retro-aldol and decarboxylation reactions. This Thermus thermophilus (strain ATCC 27634 / DSM 579 / HB8) protein is 4-hydroxy-4-methyl-2-oxoglutarate aldolase.